We begin with the raw amino-acid sequence, 62 residues long: Photosystem II reaction center protein Z (62 aa).

2 consecutive transmembrane segments (helical) span residues 8-28 (AVFA…VVLA) and 41-61 (FSGA…NSLI).

Belongs to the PsbZ family. In terms of assembly, PSII is composed of 1 copy each of membrane proteins PsbA, PsbB, PsbC, PsbD, PsbE, PsbF, PsbH, PsbI, PsbJ, PsbK, PsbL, PsbM, PsbT, PsbY, PsbZ, Psb30/Ycf12, at least 3 peripheral proteins of the oxygen-evolving complex and a large number of cofactors. It forms dimeric complexes.

Its subcellular location is the plastid. The protein localises to the chloroplast thylakoid membrane. In terms of biological role, may control the interaction of photosystem II (PSII) cores with the light-harvesting antenna, regulates electron flow through the 2 photosystem reaction centers. PSII is a light-driven water plastoquinone oxidoreductase, using light energy to abstract electrons from H(2)O, generating a proton gradient subsequently used for ATP formation. This Huperzia lucidula (Shining clubmoss) protein is Photosystem II reaction center protein Z.